Consider the following 588-residue polypeptide: Proteasome-associated ATPase (588 aa).

Positions 1-10 are enriched in basic and acidic residues; sequence MAAHDDDMNR. The tract at residues 1 to 23 is disordered; that stretch reads MAAHDDDMNRGIRPGRGSDDPAG. A coiled-coil region spans residues 47 to 94; the sequence is RILEERIVELQTNLAGVSAQNERLANTLREARDQIVALKEEVDRLAQP. 276–281 contacts ATP; sequence GCGKTL. Residues 587-588 are docks into pockets in the proteasome alpha-ring; that stretch reads YL.

Belongs to the AAA ATPase family. In terms of assembly, homohexamer. Assembles into a hexameric ring structure that caps the 20S proteasome core. Strongly interacts with the prokaryotic ubiquitin-like protein Pup through a hydrophobic interface; the interacting region of ARC lies in its N-terminal coiled-coil domain. There is one Pup binding site per ARC hexamer ring. Upon ATP-binding, the C-terminus of ARC interacts with the alpha-rings of the proteasome core, possibly by binding to the intersubunit pockets.

The protein operates within protein degradation; proteasomal Pup-dependent pathway. In terms of biological role, ATPase which is responsible for recognizing, binding, unfolding and translocation of pupylated proteins into the bacterial 20S proteasome core particle. May be essential for opening the gate of the 20S proteasome via an interaction with its C-terminus, thereby allowing substrate entry and access to the site of proteolysis. Thus, the C-termini of the proteasomal ATPase may function like a 'key in a lock' to induce gate opening and therefore regulate proteolysis. This Streptomyces avermitilis (strain ATCC 31267 / DSM 46492 / JCM 5070 / NBRC 14893 / NCIMB 12804 / NRRL 8165 / MA-4680) protein is Proteasome-associated ATPase.